We begin with the raw amino-acid sequence, 103 residues long: Large ribosomal subunit protein P1 (103 aa).

Positions Pro66–Asp103 are disordered. The span at Val80 to Glu90 shows a compositional bias: basic and acidic residues. Over residues Ser91–Asp103 the composition is skewed to acidic residues.

It belongs to the eukaryotic ribosomal protein P1/P2 family. As to quaternary structure, P1 and P2 exist as dimers at the large ribosomal subunit.

Plays an important role in the elongation step of protein synthesis. The chain is Large ribosomal subunit protein P1 from Polyorchis penicillatus (Hydromedusa).